The sequence spans 405 residues: Argininosuccinate synthase (405 aa).

11–19 (AYSGGLDTS) contacts ATP. Residue Tyr90 coordinates L-citrulline. Residue Gly119 participates in ATP binding. Residues Thr121, Asn125, and Asp126 each contribute to the L-aspartate site. Residue Asn125 participates in L-citrulline binding. 5 residues coordinate L-citrulline: Arg129, Ser178, Ser187, Glu263, and Tyr275.

This sequence belongs to the argininosuccinate synthase family. Type 1 subfamily. Homotetramer.

The protein resides in the cytoplasm. The catalysed reaction is L-citrulline + L-aspartate + ATP = 2-(N(omega)-L-arginino)succinate + AMP + diphosphate + H(+). It functions in the pathway amino-acid biosynthesis; L-arginine biosynthesis; L-arginine from L-ornithine and carbamoyl phosphate: step 2/3. The chain is Argininosuccinate synthase from Legionella pneumophila (strain Paris).